The following is a 202-amino-acid chain: Urease accessory protein UreG (202 aa).

11-18 (GPVGSGKT) provides a ligand contact to GTP.

It belongs to the SIMIBI class G3E GTPase family. UreG subfamily. Homodimer. UreD, UreF and UreG form a complex that acts as a GTP-hydrolysis-dependent molecular chaperone, activating the urease apoprotein by helping to assemble the nickel containing metallocenter of UreC. The UreE protein probably delivers the nickel.

It localises to the cytoplasm. Facilitates the functional incorporation of the urease nickel metallocenter. This process requires GTP hydrolysis, probably effectuated by UreG. This chain is Urease accessory protein UreG, found in Magnetococcus marinus (strain ATCC BAA-1437 / JCM 17883 / MC-1).